A 632-amino-acid polypeptide reads, in one-letter code: Extracellular metalloproteinase 1 (632 aa).

The first 19 residues, methionine 1–alanine 19, serve as a signal peptide directing secretion. The propeptide occupies histidine 20–histidine 243. A glycan (N-linked (GlcNAc...) asparagine) is linked at asparagine 284. Histidine 427 provides a ligand contact to Zn(2+). Residue glutamate 428 is part of the active site. Zn(2+) is bound at residue histidine 431. N-linked (GlcNAc...) asparagine glycans are attached at residues asparagine 591 and asparagine 620.

The protein belongs to the peptidase M36 family. Requires Zn(2+) as cofactor.

It is found in the secreted. In terms of biological role, secreted metalloproteinase that allows assimilation of proteinaceous substrates and probably acts as a virulence factor. This chain is Extracellular metalloproteinase 1 (MEP1), found in Arthroderma gypseum (strain ATCC MYA-4604 / CBS 118893) (Microsporum gypseum).